A 106-amino-acid chain; its full sequence is Small ribosomal subunit protein bS18 (106 aa).

The disordered stretch occupies residues 1–39; it reads MNGRNNDMGRNGGADYDDRDFGRTPDLNADAPGRRRTGR.

The protein belongs to the bacterial ribosomal protein bS18 family. In terms of assembly, part of the 30S ribosomal subunit. Forms a tight heterodimer with protein bS6.

Its function is as follows. Binds as a heterodimer with protein bS6 to the central domain of the 16S rRNA, where it helps stabilize the platform of the 30S subunit. The sequence is that of Small ribosomal subunit protein bS18 from Sorangium cellulosum (strain So ce56) (Polyangium cellulosum (strain So ce56)).